The primary structure comprises 338 residues: D-alanine--D-alanine ligase (338 aa).

Residues 120–324 (KRVMLAEGLP…YEDLCIEVLK (205 aa)) enclose the ATP-grasp domain. 150–205 (PDKLGLPLIVKPAREGSSIGLTKVTERAGMADAVAQAEKLDADILCEQFISGDEVT) is an ATP binding site. Asp277, Glu291, and Asn293 together coordinate Mg(2+).

The protein belongs to the D-alanine--D-alanine ligase family. Mg(2+) is required as a cofactor. It depends on Mn(2+) as a cofactor.

The protein localises to the cytoplasm. The catalysed reaction is 2 D-alanine + ATP = D-alanyl-D-alanine + ADP + phosphate + H(+). It functions in the pathway cell wall biogenesis; peptidoglycan biosynthesis. Functionally, cell wall formation. The protein is D-alanine--D-alanine ligase of Polaromonas sp. (strain JS666 / ATCC BAA-500).